Here is a 151-residue protein sequence, read N- to C-terminus: Large ribosomal subunit protein uL15 (151 aa).

Residues 1 to 62 (MVKLNELFPK…GGQMPLYRRV (62 aa)) form a disordered region. Over residues 11–20 (HGSRKAKRRI) the composition is skewed to basic residues.

It belongs to the universal ribosomal protein uL15 family. As to quaternary structure, part of the 50S ribosomal subunit.

In terms of biological role, binds to the 23S rRNA. This chain is Large ribosomal subunit protein uL15, found in Elusimicrobium minutum (strain Pei191).